The primary structure comprises 203 residues: ATP-dependent Clp protease proteolytic subunit 1 (203 aa).

Ser98 (nucleophile) is an active-site residue. His123 is an active-site residue.

The protein belongs to the peptidase S14 family. As to quaternary structure, fourteen ClpP subunits assemble into 2 heptameric rings which stack back to back to give a disk-like structure with a central cavity, resembling the structure of eukaryotic proteasomes.

The protein resides in the cytoplasm. The enzyme catalyses Hydrolysis of proteins to small peptides in the presence of ATP and magnesium. alpha-casein is the usual test substrate. In the absence of ATP, only oligopeptides shorter than five residues are hydrolyzed (such as succinyl-Leu-Tyr-|-NHMec, and Leu-Tyr-Leu-|-Tyr-Trp, in which cleavage of the -Tyr-|-Leu- and -Tyr-|-Trp bonds also occurs).. In terms of biological role, cleaves peptides in various proteins in a process that requires ATP hydrolysis. Has a chymotrypsin-like activity. Plays a major role in the degradation of misfolded proteins. The polypeptide is ATP-dependent Clp protease proteolytic subunit 1 (Chlamydia felis (strain Fe/C-56) (Chlamydophila felis)).